Reading from the N-terminus, the 339-residue chain is GTPase Era (339 aa).

Residues 4–48 (RHLAKFAYREEFKGDTEALAAAVREDASTGSTSQLPLEVQFGKMS) enclose the RPE1 insert domain. The 170-residue stretch at 51 to 220 (KTVSVCIIGR…ITSKAKISPW (170 aa)) folds into the Era-type G domain. Residues 59-66 (GRPNSGKS) form a G1 region. 59–66 (GRPNSGKS) serves as a coordination point for GTP. The segment at 85 to 89 (QTTRS) is G2. Residues 106-109 (DTPG) are G3. GTP-binding positions include 106-110 (DTPGI) and 168-171 (NKID). A G4 region spans residues 168-171 (NKID). Residues 196 to 198 (ISA) form a G5 region. Residues 248-325 (LQKELPYKLT…HLFLFVKVRE (78 aa)) enclose the KH type-2 domain.

This sequence belongs to the TRAFAC class TrmE-Era-EngA-EngB-Septin-like GTPase superfamily. Era GTPase family. In terms of assembly, monomer.

The protein localises to the cytoplasm. It localises to the cell inner membrane. An essential GTPase that binds both GDP and GTP, with rapid nucleotide exchange. Plays a role in 16S rRNA processing and 30S ribosomal subunit biogenesis and possibly also in cell cycle regulation and energy metabolism. In Rickettsia conorii (strain ATCC VR-613 / Malish 7), this protein is GTPase Era.